A 759-amino-acid polypeptide reads, in one-letter code: NADP-dependent malic enzyme (759 aa).

The tract at residues 1 to 428 (MDDQLKQSAL…KLTEFVYKTN (428 aa)) is malic enzyme. The Proton donor role is filled by tyrosine 39. Lysine 56 is subject to N6-acetyllysine. Residue lysine 94 is the Proton acceptor of the active site. The a divalent metal cation site is built by glutamate 136, aspartate 137, and aspartate 162. NADP(+) contacts are provided by residues 195-198 (AGAA), asparagine 288, and asparagine 320. The segment at 429–759 (LFMKPIFSQA…AVVEAQTQPL (331 aa)) is phosphate acetyltransferase; required for oligomerization, inhibition by acetyl-CoA and activation by glutamate, aspartate, and glucose-6-phosphate.

It in the N-terminal section; belongs to the malic enzymes family. In the C-terminal section; belongs to the phosphate acetyltransferase and butyryltransferase family. Homooligomer, possibly an octamer. Mg(2+) is required as a cofactor. The cofactor is Mn(2+).

It catalyses the reaction (S)-malate + NADP(+) = pyruvate + CO2 + NADPH. It carries out the reaction oxaloacetate + H(+) = pyruvate + CO2. With respect to regulation, inhibited by 4 mM Mg(2+) and acetyl-CoA, competitively inhibited by fumarate and oxaloacetate. Activated by glutamate and aspartate, glucose-6-phosphate, acetyl-phosphate and 2 mM KCl. Catalyzes the decarboxylation of malate to pyruvate. In vitro, shows malolactic enzyme activity in the presence of NADPH. However, it is unlikely that this activity is of relevance in E.coli, which produces little NADPH. The chain is NADP-dependent malic enzyme (maeB) from Escherichia coli (strain K12).